The sequence spans 178 residues: Photosystem I assembly protein Ycf4 (178 aa).

The next 2 helical transmembrane spans lie at 19-39 (FLVAAAVSVGGVGFLLASLSS) and 61-81 (LVMGLYSIAAALLASYLWYVI).

This sequence belongs to the Ycf4 family.

The protein resides in the cellular thylakoid membrane. Its function is as follows. Seems to be required for the assembly of the photosystem I complex. This Synechococcus sp. (strain CC9902) protein is Photosystem I assembly protein Ycf4.